Here is a 94-residue protein sequence, read N- to C-terminus: DNA-binding protein HU (94 aa).

Belongs to the bacterial histone-like protein family. In terms of assembly, homodimer.

Functionally, histone-like DNA-binding protein which is capable of wrapping DNA to stabilize it, and thus to prevent its denaturation under extreme environmental conditions. The chain is DNA-binding protein HU (hup) from Helicobacter pylori (strain J99 / ATCC 700824) (Campylobacter pylori J99).